We begin with the raw amino-acid sequence, 500 residues long: Serine/threonine-protein phosphatase 2A 56 kDa regulatory subunit beta isoform (500 aa).

Low complexity predominate over residues 1–19; sequence METKLPPASTPTSPSSPGL. Disordered regions lie at residues 1-55 and 474-500; these read METK…YQSN and GTQG…GGQS. Residues Ser-32, Ser-35, Ser-44, Ser-46, Ser-47, and Ser-48 each carry the phosphoserine; by CLK2 modification. A compositionally biased stretch (basic residues) spans 34 to 45; it reads RSLRRARPRRSH.

Belongs to the phosphatase 2A regulatory subunit B56 family. In terms of assembly, component of the serine/threonine-protein phosphatase 2A complex (PP2A). This complex consists of a common heterodimeric core enzyme, composed of a 36 kDa catalytic subunit (subunit C) and a 65 kDa constant scaffold subunit (PR65 or subunit A), that associates with a variety of regulatory subunits. Proteins that associate with the core dimer include three families of regulatory subunits B (the R2/B/PR55/B55, R3/B''/PR72/PR130/PR59 and R5/B'/B56 families), the 48 kDa variable regulatory subunit, viral proteins, and cell signaling molecules. Interacts with SGO1. Interacts with AKT1. Highly expressed in brain.

It is found in the nucleus. Functionally, as the regulatory component of the serine/threonine-protein phosphatase 2A (PP2A) holoenzyme, modulates substrate specificity, subcellular localization, and responsiveness to phosphorylation. The phosphorylated form mediates the interaction between PP2A and AKT1, leading to AKT1 dephosphorylation. The sequence is that of Serine/threonine-protein phosphatase 2A 56 kDa regulatory subunit beta isoform (PPP2R5B) from Oryctolagus cuniculus (Rabbit).